The chain runs to 5065 residues: Dynein heavy chain-like protein 1 (5065 aa).

The stem stretch occupies residues 1–1957 (MELEKTHLIN…IIKMADATFE (1957 aa)). Positions 1677–1705 (QMEGFQKQLDRLSDSLSKIQKALGEYLEK) form a coiled coil. The tract at residues 1958–2179 (YGYEYLGMCE…LRSLKSVLNS (222 aa)) is AAA 1. Residue 1996 to 2003 (GPAGTGKT) participates in ATP binding. The segment at 2203-2223 (FNETLDNNNNNDNNNERKTTT) is disordered. Low complexity predominate over residues 2204–2215 (NETLDNNNNNDN). 3 AAA regions span residues 2281 to 2632 (NEIH…YEYI), 2751 to 3004 (DVDR…WKLA), and 3097 to 3367 (IFNE…GNRY). Residue 2319–2326 (GDVGTGKS) coordinates ATP. Residues 2507–2529 (EKNQNGNENGNENEKKNINIINN) are disordered. ATP-binding positions include 2790–2797 (GPPGSGKT) and 3135–3142 (GASGAGKT). The stalk stretch occupies residues 3386 to 3701 (IDEKKEEVSS…ETFINLEEAS (316 aa)). 2 coiled-coil regions span residues 3388 to 3466 (EKKE…LDEQ) and 3970 to 3997 (TMEK…EVEN). AAA stretches follow at residues 3754 to 3983 (LSRP…EASK) and 4289 to 4507 (FNKI…VVDS). Positions 4686 to 4705 (KDKNKDEDKNKNKENDDNNK) are enriched in basic and acidic residues. A disordered region spans residues 4686–4727 (KDKNKDEDKNKNKENDDNNKKHIGNNKLVISSSERTESETSE).

The protein belongs to the dynein heavy chain family. In terms of assembly, consists of at least two heavy chains and a number of intermediate and light chains.

The protein localises to the cytoplasm. It localises to the cytoskeleton. Acts as a motor for the intracellular retrograde motility of vesicles and organelles along microtubules. Dynein has ATPase activity; the force-producing power stroke is thought to occur on release of ADP. The chain is Dynein heavy chain-like protein 1 from Plasmodium falciparum (isolate 3D7).